The primary structure comprises 243 residues: Probable transcriptional regulatory protein BG0025 (243 aa).

It belongs to the TACO1 family.

It localises to the cytoplasm. The sequence is that of Probable transcriptional regulatory protein BG0025 from Borrelia garinii subsp. bavariensis (strain ATCC BAA-2496 / DSM 23469 / PBi) (Borreliella bavariensis).